Here is a 637-residue protein sequence, read N- to C-terminus: Chaperone protein HtpG (637 aa).

Residues methionine 1–arginine 338 form an a; substrate-binding region. The segment at glutamate 339–arginine 558 is b. The interval lysine 493–glycine 512 is disordered. A c region spans residues phenylalanine 559–isoleucine 637.

It belongs to the heat shock protein 90 family. Homodimer.

The protein resides in the cytoplasm. In terms of biological role, molecular chaperone. Has ATPase activity. The chain is Chaperone protein HtpG from Wolbachia sp. subsp. Brugia malayi (strain TRS).